The following is a 594-amino-acid chain: Cryptochrome-2 (594 aa).

The Photolyase/cryptochrome alpha/beta domain maps to 21–150; it reads ASSVHWFRKG…EVVTENSHTL (130 aa). A Glycyl lysine isopeptide (Lys-Gly) (interchain with G-Cter in ubiquitin) cross-link involves residue K29. Position 89 is a phosphoserine (S89). Glycyl lysine isopeptide (Lys-Gly) (interchain with G-Cter in ubiquitin) cross-links involve residues K125 and K241. Phosphoserine; by MAPK is present on S265. S270 serves as a coordination point for FAD. Phosphoserine is present on S298. Q307 serves as a coordination point for FAD. K347 is covalently cross-linked (Glycyl lysine isopeptide (Lys-Gly) (interchain with G-Cter in ubiquitin)). Residues H373 and 405–407 each bind FAD; that span reads DAD. The interval 389 to 488 is required for inhibition of CLOCK-BMAL1-mediated transcription; that stretch reads WVSWESGVRV…IIGVDYPRPI (100 aa). Glycyl lysine isopeptide (Lys-Gly) (interchain with G-Cter in ubiquitin) cross-links involve residues K474 and K503. The interval 532–594 is disordered; the sequence is VAEPGSSQAG…PAQEPPSKDS (63 aa). The span at 536–547 shows a compositional bias: polar residues; it reads GSSQAGSISNTG. Residue S553 is modified to Phosphoserine; by GSK3-beta. A Phosphoserine; by DYRK1A and MAPK modification is found at S557.

Belongs to the DNA photolyase class-1 family. Component of the circadian core oscillator, which includes the CRY proteins, CLOCK or NPAS2, BMAL1 or BMAL2, CSNK1D and/or CSNK1E, TIMELESS, and the PER proteins. Interacts with TIMELESS. Interacts directly with PER1, PER2 and PER3; interaction with PER2 inhibits its ubiquitination and vice versa. Interacts with CLOCK-BMAL1. Interacts with CLOCK. Interacts with BMAL1. Interacts with NFIL3. Interacts with FBXL3 and FBXL21. FBXL3, PER2 and the cofactor FAD compete for overlapping binding sites. FBXL3 cannot bind CRY2 that interacts already with PER2 or that contains bound FAD. Interacts with PPP5C (via TPR repeats); the interaction down-regulates the PPP5C phosphatase activity on CSNK1E. Interacts with nuclear receptors AR and NR3C1/GR; the interaction is ligand dependent. Interacts with PRKDC and CIART. Interacts with DDB1, USP7 and TARDBP. Interacts with HNF4A and PPARA. Interacts with PPARD (via domain NR LBD) and NR1I2 (via domain NR LBD) in a ligand-dependent manner. Interacts with PPARG, NR1I3 and VDR in a ligand-dependent manner. Requires FAD as cofactor. (6R)-5,10-methylene-5,6,7,8-tetrahydrofolate is required as a cofactor. Phosphorylation on Ser-265 by MAPK is important for the inhibition of CLOCK-BMAL1-mediated transcriptional activity. Phosphorylation by CSKNe requires interaction with PER1 or PER2. Phosphorylated in a circadian manner at Ser-553 and Ser-557 in the suprachiasmatic nucleus (SCN) and liver. Phosphorylation at Ser-557 by DYRK1A promotes subsequent phosphorylation at Ser-553 by GSK3-beta: the two-step phosphorylation at the neighboring Ser residues leads to its proteasomal degradation. In terms of processing, ubiquitinated by the SCF(FBXL3) and SCF(FBXL21) complexes, regulating the balance between degradation and stabilization. The SCF(FBXL3) complex is mainly nuclear and mediates ubiquitination and subsequent degradation of CRY2. In contrast, cytoplasmic SCF(FBXL21) complex-mediated ubiquitination leads to stabilize CRY2 and counteract the activity of the SCF(FBXL3) complex. The SCF(FBXL3) and SCF(FBXL21) complexes probably mediate ubiquitination at different Lys residues. The SCF(FBXL3) complex recognizes and binds CRY2 phosphorylated at Ser-553 and Ser-557. Ubiquitination may be inhibited by PER2. Deubiquitinated by USP7. As to expression, expressed in all tissues examined including heart, cerebellum, cerebral cortex, lung, liver, muscle, kidney and ovary. Highest levels in heart, liver and ovary. Highly expressed in the suprachiasmatic nucleus (SCN).

It is found in the cytoplasm. It localises to the nucleus. Its function is as follows. Transcriptional repressor which forms a core component of the circadian clock. The circadian clock, an internal time-keeping system, regulates various physiological processes through the generation of approximately 24 hour circadian rhythms in gene expression, which are translated into rhythms in metabolism and behavior. It is derived from the Latin roots 'circa' (about) and 'diem' (day) and acts as an important regulator of a wide array of physiological functions including metabolism, sleep, body temperature, blood pressure, endocrine, immune, cardiovascular, and renal function. Consists of two major components: the central clock, residing in the suprachiasmatic nucleus (SCN) of the brain, and the peripheral clocks that are present in nearly every tissue and organ system. Both the central and peripheral clocks can be reset by environmental cues, also known as Zeitgebers (German for 'timegivers'). The predominant Zeitgeber for the central clock is light, which is sensed by retina and signals directly to the SCN. The central clock entrains the peripheral clocks through neuronal and hormonal signals, body temperature and feeding-related cues, aligning all clocks with the external light/dark cycle. Circadian rhythms allow an organism to achieve temporal homeostasis with its environment at the molecular level by regulating gene expression to create a peak of protein expression once every 24 hours to control when a particular physiological process is most active with respect to the solar day. Transcription and translation of core clock components (CLOCK, NPAS2, BMAL1, BMAL2, PER1, PER2, PER3, CRY1 and CRY2) plays a critical role in rhythm generation, whereas delays imposed by post-translational modifications (PTMs) are important for determining the period (tau) of the rhythms (tau refers to the period of a rhythm and is the length, in time, of one complete cycle). A diurnal rhythm is synchronized with the day/night cycle, while the ultradian and infradian rhythms have a period shorter and longer than 24 hours, respectively. Disruptions in the circadian rhythms contribute to the pathology of cardiovascular diseases, cancer, metabolic syndromes and aging. A transcription/translation feedback loop (TTFL) forms the core of the molecular circadian clock mechanism. Transcription factors, CLOCK or NPAS2 and BMAL1 or BMAL2, form the positive limb of the feedback loop, act in the form of a heterodimer and activate the transcription of core clock genes and clock-controlled genes (involved in key metabolic processes), harboring E-box elements (5'-CACGTG-3') within their promoters. The core clock genes: PER1/2/3 and CRY1/2 which are transcriptional repressors form the negative limb of the feedback loop and interact with the CLOCK|NPAS2-BMAL1|BMAL2 heterodimer inhibiting its activity and thereby negatively regulating their own expression. This heterodimer also activates nuclear receptors NR1D1/2 and RORA/B/G, which form a second feedback loop and which activate and repress BMAL1 transcription, respectively. CRY1 and CRY2 have redundant functions but also differential and selective contributions at least in defining the pace of the SCN circadian clock and its circadian transcriptional outputs. Less potent transcriptional repressor in cerebellum and liver than CRY1, though less effective in lengthening the period of the SCN oscillator. Seems to play a critical role in tuning SCN circadian period by opposing the action of CRY1. With CRY1, dispensable for circadian rhythm generation but necessary for the development of intercellular networks for rhythm synchrony. May mediate circadian regulation of cAMP signaling and gluconeogenesis by blocking glucagon-mediated increases in intracellular cAMP concentrations and in CREB1 phosphorylation. Besides its role in the maintenance of the circadian clock, is also involved in the regulation of other processes. Plays a key role in glucose and lipid metabolism modulation, in part, through the transcriptional regulation of genes involved in these pathways, such as LEP or ACSL4. Represses glucocorticoid receptor NR3C1/GR-induced transcriptional activity by binding to glucocorticoid response elements (GREs). Represses the CLOCK-BMAL1 induced transcription of BHLHE40/DEC1 and NAMPT. Represses PPARD and its target genes in the skeletal muscle and limits exercise capacity. Represses the transcriptional activity of NR1I2. The sequence is that of Cryptochrome-2 (Cry2) from Rattus norvegicus (Rat).